Reading from the N-terminus, the 129-residue chain is Profilin-4 (129 aa).

The protein belongs to the profilin family. As to expression, expressed in testis, in germ cells in seminiferous tubules (at protein level).

Its subcellular location is the cytoplasm. Functionally, involved in male fertility. Required for manchette development and acrosome biogenesis during spermiogenesis. Binds in vitro to phospholipids, including phosphatidylinositol 3-phosphate (PtdIns(3)P), phosphatidylinositol 4,5-bisphosphate (PtdIns(4,5)P2), phosphatidylinositol 4-phosphate (PtdIns(4)P) and phosphatidic acid (PA). Contrary to other profilin family members, does not bind to actin in vitro. The chain is Profilin-4 (Pfn4) from Mus musculus (Mouse).